The following is a 547-amino-acid chain: ATP synthase subunit alpha (547 aa).

173-180 (GDRQTGKT) contacts ATP.

This sequence belongs to the ATPase alpha/beta chains family. In terms of assembly, F-type ATPases have 2 components, CF(1) - the catalytic core - and CF(0) - the membrane proton channel. CF(1) has five subunits: alpha(3), beta(3), gamma(1), delta(1), epsilon(1). CF(0) has three main subunits: a(1), b(2) and c(9-12). The alpha and beta chains form an alternating ring which encloses part of the gamma chain. CF(1) is attached to CF(0) by a central stalk formed by the gamma and epsilon chains, while a peripheral stalk is formed by the delta and b chains.

The protein localises to the cell membrane. The catalysed reaction is ATP + H2O + 4 H(+)(in) = ADP + phosphate + 5 H(+)(out). Its function is as follows. Produces ATP from ADP in the presence of a proton gradient across the membrane. The alpha chain is a regulatory subunit. The polypeptide is ATP synthase subunit alpha (Thermobifida fusca (strain YX)).